The primary structure comprises 364 residues: MAGNTFGRALRLTTFGESHGPGLGGIIDGCPAGLELTEAHIQAELDRRKPGQGPTATKRKEADTVRLLSGVFEGCTTGTPIAFFIANEDQRSRDYGNLAEAFRPGHADWAYFQKYNGLRDHRGGGRSSGRETAARVAGGVIAKKILARRGVTILGGCVELGGIAAPLWGLDMDGAAARPYCAAAPSVVSQWDALVAEARKAGETLGGIVRIEAHNVPAGLGEPVFDKLDAVLAHAVMSVGAVKGVEVGEGFAAAALRGSQNNDPLLPADAPEPGRARFASNHAGGILGGISSGQDIVLRVAVKPIASIAVTQKTVDRQGQPVDILIGGRHDLSAIPRIVPVLEAMTALALADALLLQQRMGLGL.

NADP(+) is bound at residue Arg48. Residues 126 to 128 (RSS), Gly288, 303 to 307 (KPIAS), and Arg329 each bind FMN.

The protein belongs to the chorismate synthase family. In terms of assembly, homotetramer. Requires FMNH2 as cofactor.

The enzyme catalyses 5-O-(1-carboxyvinyl)-3-phosphoshikimate = chorismate + phosphate. Its pathway is metabolic intermediate biosynthesis; chorismate biosynthesis; chorismate from D-erythrose 4-phosphate and phosphoenolpyruvate: step 7/7. In terms of biological role, catalyzes the anti-1,4-elimination of the C-3 phosphate and the C-6 proR hydrogen from 5-enolpyruvylshikimate-3-phosphate (EPSP) to yield chorismate, which is the branch point compound that serves as the starting substrate for the three terminal pathways of aromatic amino acid biosynthesis. This reaction introduces a second double bond into the aromatic ring system. This is Chorismate synthase from Desulfovibrio desulfuricans (strain ATCC 27774 / DSM 6949 / MB).